Here is a 73-residue protein sequence, read N- to C-terminus: Conotoxin reg3a (73 aa).

The signal sequence occupies residues 1 to 20; the sequence is MMSKLRVLLTICLLLFPLSA. Residues 21 to 55 constitute a propeptide that is removed on maturation; it reads LPLDGDQPADQPAKRMWNGKLAARKPRFDKYDLVR. Residues proline 59, proline 60, proline 65, and proline 70 each carry the 4-hydroxyproline modification. Position 72 is a cysteine amide (cysteine 72).

Post-translationally, contains 3 disulfide bonds. Expressed by the venom duct.

It is found in the secreted. The protein is Conotoxin reg3a of Conus regius (Crown cone).